The sequence spans 1591 residues: Rho guanine nucleotide exchange factor TIAM1 (1591 aa).

Positions 1–70 (MGNAESQNVD…TPSIPQSLAE (70 aa)) are disordered. The N-myristoyl glycine moiety is linked to residue glycine 2. Over residues 8–19 (NVDHEFYGEKHA) the composition is skewed to basic and acidic residues. Over residues 20–49 (SLGRKHTSRSLRLSHKTRRTRHASSGKAIH) the composition is skewed to basic residues. Low complexity predominate over residues 53-67 (EVSTRSSSTPSIPQS). 3 positions are modified to phosphoserine: serine 231, serine 356, and serine 358. 2 disordered regions span residues 305–380 (QISL…DRAR) and 393–422 (MSTT…SPGQ). The span at 340–359 (TTDTDLLSRRSNATNSSYSP) shows a compositional bias: polar residues. Low complexity predominate over residues 367 to 376 (GSDSGSSSTG). A compositionally biased stretch (polar residues) spans 412-422 (QSSGTLSSPGQ). Residues 434–549 (VRKAGALAVK…TAIHSACAAA (116 aa)) form the PH 1 domain. The residue at position 695 (serine 695) is a Phosphoserine. Residues 765 to 832 (TPSWFCLPNN…QPEEDIYELL (68 aa)) form the RBD domain. At tyrosine 829 the chain carries Phosphotyrosine; by NTRK2. The PDZ domain occupies 845 to 908 (NIHIEKSDAA…NNRAAGTLNS (64 aa)). Positions 933–1034 (GVELLENPPH…TSPQLATTRQ (102 aa)) are disordered. Residues 958–975 (LTSNPGHSLSSEQGSSAE) are compositionally biased toward polar residues. Acidic residues predominate over residues 977-990 (APEEGEGPDLESSD). The span at 1014–1028 (PSDSSPSPQDATSPQ) shows a compositional bias: low complexity. Positions 1040–1234 (KLRKVICELL…NKVASHINEM (195 aa)) constitute a DH domain. The 137-residue stretch at 1261–1397 (DLSMGDLLLH…KSVHSILRDK (137 aa)) folds into the PH 2 domain. At tyrosine 1323 the chain carries Phosphotyrosine. Glycyl lysine isopeptide (Lys-Gly) (interchain with G-Cter in ubiquitin) cross-links involve residues lysine 1404 and lysine 1420. The segment at 1456 to 1481 (TIDSDAISASSPEKEPQQPAGGGDTD) is disordered. Serine 1519 is modified (phosphoserine).

The protein belongs to the TIAM family. Component of the Par polarity complex, composed of at least phosphorylated PRKCZ, PARD3 and TIAM1. Interacts with BAIAP2. Interacts (via PDZ domain) with CNTNAP4, SDC1 and SDC3 (via C-terminus). Interacts with CD44, PARD3 and MAPK8IP2. Interacts with EPHA8; regulates clathrin-mediated endocytosis of EPHA8. Interacts with NTRK2; mediates the activation of RAC1 by BDNF. In terms of processing, ubiquitinated. Undergoes 'Lys-48' ubiquitination at Lys-1404 and Lys-1420 by a CUL3(KBTBD6/7) E3 ubiquitin ligase complex composed of CUL3, RBX1, KBTBD6 and KBTBD7. 'Lys-48' ubiquitination at Lys-1404 and Lys-1420 triggers proteasomal degradation. Ubiquitination at Lys-1404 and Lys-1420 by CUL3(KBTBD6/7) also requires the membrane-associated protein GABARAP and may therefore be spatially restricted within the cell. In terms of tissue distribution, highly expressed in brain and testis and at low or moderate levels in almost all other normal tissues. Found in virtually all analyzed tumor cell lines including B- and T-lymphomas, neuroblastomas, melanomas and carcinomas.

It localises to the cell junction. Its subcellular location is the cell membrane. In terms of biological role, guanyl-nucleotide exchange factor that activates RHO-like proteins and connects extracellular signals to cytoskeletal activities. Activates RAC1, CDC42, and to a lesser extent RHOA and their downstream signaling to regulate processes like cell adhesion and cell migration. The chain is Rho guanine nucleotide exchange factor TIAM1 from Mus musculus (Mouse).